The primary structure comprises 302 residues: uncharacterized protein (302 aa).

9 helical membrane-spanning segments follow: residues 10–30 (VLSV…GVLG), 65–85 (LVLI…IAYL), 102–122 (VAAA…GIFG), 130–150 (IFYD…LSHI), 162–182 (AVFF…LWGL), 190–210 (ILGY…GLTL), 224–244 (LVSG…SYVL), 251–271 (FSVT…VLAI), and 282–302 (SCIF…SVVL).

This sequence belongs to the auxin efflux carrier (TC 2.A.69) family.

Its subcellular location is the cell membrane. This is an uncharacterized protein from Methanothermobacter thermautotrophicus (strain ATCC 29096 / DSM 1053 / JCM 10044 / NBRC 100330 / Delta H) (Methanobacterium thermoautotrophicum).